Reading from the N-terminus, the 320-residue chain is Nicotianamine synthase 3 (320 aa).

This sequence belongs to the nicotianamine synthase (NAS)-like family. In shoots.

It catalyses the reaction 3 S-adenosyl-L-methionine = nicotianamine + 3 S-methyl-5'-thioadenosine + 3 H(+). Synthesizes nicotianamine, a polyamine which serves as a sensor for the physiological iron status within the plant, and/or might be involved in the transport of iron. The polypeptide is Nicotianamine synthase 3 (NAS3) (Arabidopsis thaliana (Mouse-ear cress)).